The following is a 314-amino-acid chain: Homoserine kinase (314 aa).

Residue 96–106 (PIGSGLGSSAC) participates in ATP binding.

It belongs to the GHMP kinase family. Homoserine kinase subfamily.

Its subcellular location is the cytoplasm. The enzyme catalyses L-homoserine + ATP = O-phospho-L-homoserine + ADP + H(+). The protein operates within amino-acid biosynthesis; L-threonine biosynthesis; L-threonine from L-aspartate: step 4/5. In terms of biological role, catalyzes the ATP-dependent phosphorylation of L-homoserine to L-homoserine phosphate. The protein is Homoserine kinase of Haemophilus influenzae (strain PittEE).